The following is a 182-amino-acid chain: Transcription termination/antitermination protein NusG (182 aa).

In terms of domain architecture, KOW spans 131 to 163 (VGEQVRIKSGPFANQVGEVQEIETDKFKLTVLV).

It belongs to the NusG family.

In terms of biological role, participates in transcription elongation, termination and antitermination. This chain is Transcription termination/antitermination protein NusG, found in Staphylococcus aureus (strain NCTC 8325 / PS 47).